A 219-amino-acid polypeptide reads, in one-letter code: Small ribosomal subunit protein uS3c (219 aa).

The KH type-2 domain maps to 47–118 (IKKNIRISSG…KINIAITRIT (72 aa)).

The protein belongs to the universal ribosomal protein uS3 family. In terms of assembly, part of the 30S ribosomal subunit.

It is found in the plastid. Its subcellular location is the chloroplast. The polypeptide is Small ribosomal subunit protein uS3c (rps3) (Citrus sinensis (Sweet orange)).